We begin with the raw amino-acid sequence, 488 residues long: MLAKKQKMQETDTEQEATPHTIQARLVSDTGEEAGPPIDLPAGITTQQLGLICNALLKNEEATPYLFFVGEDEIKKSLEDTLDLASVDTENVIDIVYQPQAVFKVRPVTRCTSSMPGHAEAVVSLNFSPDGAHLASGSGDTTVRLWDLNTETPHFTCTGHKQWVLCVSWAPDGKRLASGCKAGSIIIWDPETGQQKGRPLSGHKKHINCLAWEPYHRDPECRKLASASGDGDCRIWDVKLGQCLMNIAGHTNAVTAVRWGGAGLIYTSSKDRTVKMWRAADGILCRTFSGHAHWVNNIALSTDYVLRTGPFHPVKDRSKSHLSLSTEELQESALKRYQAVCPDEVESLVSCSDDNTLYLWRNNQNKCVERMTGHQNVVNDVKYSPDVKLIASASFDKSVRLWRASDGQYMATFRGHVQAVYTVAWSADSRLIVSGSKDSTLKVWSVQTKKLAQELPGHADEVFGVDWAPDGSRVASGGKDKVIKLWAY.

The disordered stretch occupies residues Met-1–Ile-22. The interval Pro-19 to Ala-101 is ubiquitin-like (UBL) domain. WD repeat units follow at residues Gly-117–Thr-156, Gly-159–Arg-198, Gly-202–Asn-246, Gly-249–Thr-287, Leu-329–Arg-370, Gly-373–Thr-412, Gly-415–Glu-454, and Gly-457–Tyr-488.

The protein belongs to the NLE1/RSA4 family. Interacts with Notch (via cytoplasmic domain). Associates with the pre-60S ribosomal particle.

It is found in the nucleus. It localises to the nucleolus. Functionally, plays a role in regulating Notch activity. This is Protein Notchless from Drosophila melanogaster (Fruit fly).